The primary structure comprises 521 residues: Adenosylhomocysteinase-like 1 (521 aa).

The segment at Met-1–Ser-92 is disordered. A compositionally biased stretch (low complexity) spans Arg-54–Ser-73. 2 residues coordinate substrate: Asp-220 and Glu-245. NAD(+) is bound at residue Ser-246–Thr-248. Substrate-binding residues include Lys-275 and Asp-279. NAD(+)-binding positions include Gly-311–Gly-316, Glu-332, Met-388–His-390, Asn-435, Lys-515, Lys-515–Tyr-519, and Tyr-519.

The protein belongs to the adenosylhomocysteinase family. As to quaternary structure, interacts with Ahcy; the interaction may negatively regulate Ahcy catalytic activity. Requires NAD(+) as cofactor.

Might play a role in the regulation of methionine metabolism possibly by binding and inactivating Ahcy. The chain is Adenosylhomocysteinase-like 1 from Drosophila melanogaster (Fruit fly).